Reading from the N-terminus, the 350-residue chain is uncharacterized protein (350 aa).

One can recognise an Integrase catalytic domain in the interval 164 to 327 (NDPLPGYVEV…EKTRIGARVV (164 aa)).

This is an uncharacterized protein from Sinorhizobium fredii (strain NBRC 101917 / NGR234).